Here is a 342-residue protein sequence, read N- to C-terminus: Polycomb group RING finger protein 2 (342 aa).

The RING-type zinc-finger motif lies at 18 to 57; sequence CALCGGYFIDATTIVECLHSFCKTCIVRYLETNKYCPMCD. Residues K51 and K88 each participate in a glycyl lysine isopeptide (Lys-Gly) (interchain with G-Cter in SUMO2) cross-link. The Nuclear localization signal motif lies at 81–95; it reads KLVPGLFKDEMKRRR. Residue T237 is modified to Phosphothreonine; by PKA. The segment at 237–342 is disordered; that stretch reads TLPTVPTPSE…MTVNGAPCPP (106 aa). The span at 243 to 253 shows a compositional bias: polar residues; it reads TPSEGTNTSGA. Low complexity predominate over residues 263–318; sequence APSPATLPATSSSLPSPATPSHGSPSSHGPPATHPTSPTPPSTAAGTTTATNGGTS. Polar residues predominate over residues 319-328; it reads NCLQTPSSTS. At T334 the chain carries Phosphothreonine; by PKA.

In terms of assembly, exists as both a monomer and homodimer. Component of a PRC1-like complex. Interacts with CBX8, RING1 and RNF2. Interacts with CBX7. Interacts with PHC2. In terms of processing, phosphorylated. Homodimer formation is regulated by phosphorylation with only unphosphorylated proteins forming homodimers. As to expression, expressed in embryonic stem cells. Expressed in a variety of tumor cells and in neural tissues.

The protein localises to the nucleus. Transcriptional repressor. Binds specifically to the DNA sequence 5'-GACTNGACT-3'. Has tumor suppressor activity. May play a role in control of cell proliferation and/or neural cell development. Regulates proliferation of early T progenitor cells by maintaining expression of HES1. Also plays a role in antero-posterior specification of the axial skeleton and negative regulation of the self-renewal activity of hematopoietic stem cells. Component of a Polycomb group (PcG) multiprotein PRC1-like complex, a complex class required to maintain the transcriptionally repressive state of many genes, including Hox genes, throughout development. PcG PRC1 complex acts via chromatin remodeling and modification of histones; it mediates monoubiquitination of histone H2A 'Lys-119', rendering chromatin heritably changed in its expressibility. Within the PRC1-like complex, regulates RNF2 ubiquitin ligase activity. In Mus musculus (Mouse), this protein is Polycomb group RING finger protein 2 (Pcgf2).